Consider the following 303-residue polypeptide: uncharacterized protein (303 aa).

In terms of domain architecture, S4 RNA-binding spans 15–74; that stretch reads ERIDKFLASTENDWSRTQVQQWVKDGQVVVNGSAVKANYKIQPGDQVTVTVPEPEALDVL. The active site involves Asp138.

This sequence belongs to the pseudouridine synthase RluA family.

The enzyme catalyses a uridine in RNA = a pseudouridine in RNA. This is an uncharacterized protein from Bacillus subtilis (strain 168).